Reading from the N-terminus, the 381-residue chain is Periphilin-1 (381 aa).

3 stretches are compositionally biased toward basic and acidic residues: residues 1–28 (MWSE…DGYH), 39–65 (PLLD…GYSR), and 79–121 (RSFS…DGFR). 2 disordered regions span residues 1–65 (MWSE…GYSR) and 79–260 (RSFS…KSDE). A Nuclear localization signal motif is present at residues 117-123 (RDGFRRK). Lysine 123 is covalently cross-linked (Glycyl lysine isopeptide (Lys-Gly) (interchain with G-Cter in SUMO2)). A phosphoserine mark is found at serine 124, serine 128, serine 147, and serine 154. Residues 130 to 156 (YSRDRSPHKRDAPFFRESPVGRKDSPH) show a composition bias toward basic and acidic residues. Positions 157-168 (SRSGSSVSSRSY) are enriched in low complexity. Positions 175-187 (THSFHQSQHRKSS) are enriched in basic residues. Residue serine 181 is modified to Phosphoserine. Residue lysine 194 forms a Glycyl lysine isopeptide (Lys-Gly) (interchain with G-Cter in SUMO2) linkage. Positions 195-208 (RQNEAIRGRGKERS) are enriched in basic and acidic residues. Serine 211 carries the post-translational modification Phosphoserine. Lysine 213 is covalently cross-linked (Glycyl lysine isopeptide (Lys-Gly) (interchain with G-Cter in SUMO2)). A phosphoserine mark is found at serine 215 and serine 219. Positions 217 to 230 (DASPSSSSAVASSK) are enriched in low complexity. Basic and acidic residues predominate over residues 231–260 (ALDKPSRLTEKELAEAESKWANETLEKSDE). Residue lysine 241 forms a Glycyl lysine isopeptide (Lys-Gly) (interchain with G-Cter in SUMO2) linkage. Position 249 is an N6-acetyllysine; alternate (lysine 249). Lysine 249 participates in a covalent cross-link: Glycyl lysine isopeptide (Lys-Gly) (interchain with G-Cter in SUMO2); alternate. Serine 339 carries the post-translational modification Phosphoserine. Lysine 342 is covalently cross-linked (Glycyl lysine isopeptide (Lys-Gly) (interchain with G-Cter in SUMO2)).

Homodimer. Component of the HUSH complex; at least composed of TASOR, PPHLN1 and MPHOSPH8. Interacts with SIN3A and HDAC1. May interact with PPL. As to expression, ubiquitously expressed. Strong expression in the developing somites and limbs, the embryonic nervous system and the adult brain.

Its subcellular location is the nucleus. It is found in the cytoplasm. It localises to the chromosome. Functionally, component of the HUSH complex, a multiprotein complex that mediates epigenetic repression. The HUSH complex is recruited to genomic loci rich in H3K9me3 and is probably required to maintain transcriptional silencing by promoting recruitment of SETDB1, a histone methyltransferase that mediates further deposition of H3K9me3. In the HUSH complex, contributes to the maintenance of the complex at chromatin. Acts as a transcriptional corepressor and regulates the cell cycle, probably via the HUSH complex. The HUSH complex is also involved in the silencing of unintegrated retroviral DNA: some part of the retroviral DNA formed immediately after infection remains unintegrated in the host genome and is transcriptionally repressed. May be involved in epithelial differentiation by contributing to epidermal integrity and barrier formation. This Mus musculus (Mouse) protein is Periphilin-1.